We begin with the raw amino-acid sequence, 76 residues long: DNA-directed RNA polymerase subunit epsilon (76 aa).

The protein belongs to the RNA polymerase subunit epsilon family. RNAP is composed of a core of 2 alpha, a beta and a beta' subunit. The core is associated with a delta subunit, and at least one of epsilon or omega. When a sigma factor is associated with the core the holoenzyme is formed, which can initiate transcription.

It catalyses the reaction RNA(n) + a ribonucleoside 5'-triphosphate = RNA(n+1) + diphosphate. In terms of biological role, a non-essential component of RNA polymerase (RNAP). The chain is DNA-directed RNA polymerase subunit epsilon from Streptococcus sanguinis (strain SK36).